A 214-amino-acid chain; its full sequence is Rac-like GTP-binding protein 3 (214 aa).

15-22 (GDGAVGKT) is a GTP binding site. Residues 37 to 45 (YIPTVFDNF) carry the Effector region motif. Residues 62–66 (DTAGQ) and 120–123 (TKLD) contribute to the GTP site.

Belongs to the small GTPase superfamily. Rho family. In terms of processing, may be palmitoylated.

The protein resides in the cytoplasm. Its subcellular location is the membrane. In terms of biological role, inactive GDP-bound Rho GTPases reside in the cytosol, are found in a complex with Rho GDP-dissociation inhibitors (Rho GDIs), and are released from the GDI protein in order to translocate to membranes upon activation. This Oryza sativa subsp. japonica (Rice) protein is Rac-like GTP-binding protein 3 (RAC3).